A 243-amino-acid chain; its full sequence is Triosephosphate isomerase (243 aa).

9 to 11 serves as a coordination point for substrate; it reads NWK. Histidine 96 acts as the Electrophile in catalysis. Catalysis depends on glutamate 165, which acts as the Proton acceptor. Substrate contacts are provided by residues glycine 171, serine 204, and 225–226; that span reads GG.

This sequence belongs to the triosephosphate isomerase family. In terms of assembly, homodimer.

It localises to the cytoplasm. The catalysed reaction is D-glyceraldehyde 3-phosphate = dihydroxyacetone phosphate. Its pathway is carbohydrate biosynthesis; gluconeogenesis. It participates in carbohydrate degradation; glycolysis; D-glyceraldehyde 3-phosphate from glycerone phosphate: step 1/1. Involved in the gluconeogenesis. Catalyzes stereospecifically the conversion of dihydroxyacetone phosphate (DHAP) to D-glyceraldehyde-3-phosphate (G3P). The protein is Triosephosphate isomerase of Prochlorococcus marinus (strain MIT 9211).